Consider the following 116-residue polypeptide: Hydrogenase maturation factor HypA (116 aa).

His-2 serves as a coordination point for Ni(2+). Residues Cys-73, Cys-76, Cys-89, and Cys-92 each contribute to the Zn(2+) site.

The protein belongs to the HypA/HybF family.

In terms of biological role, involved in the maturation of [NiFe] hydrogenases. Required for nickel insertion into the metal center of the hydrogenase. The chain is Hydrogenase maturation factor HypA from Chlorobium limicola (strain DSM 245 / NBRC 103803 / 6330).